The primary structure comprises 300 residues: Transcription elongation factor A protein 2 (300 aa).

The TFIIS N-terminal domain occupies 6-83 (EEIARIARRL…KSWKKLLDAS (78 aa)). Residue K58 forms a Glycyl lysine isopeptide (Lys-Gly) (interchain with G-Cter in ubiquitin) linkage. A phosphoserine mark is found at S60 and S101. The interval 84 to 131 (DAKARERRRGGSLPTSSSKEASEAQDPSRKRPELPRMPSTPRITTFPP) is disordered. The span at 103–117 (EASEAQDPSRKRPEL) shows a compositional bias: basic and acidic residues. Residues 139–255 (VRTKCREMLT…EHQMARTGGT (117 aa)) form the TFIIS central domain. The TFIIS-type zinc-finger motif lies at 258–298 (DLFTCGKCRKKNCTYTQVQTRSSDEPMTTFVVCNECGNRWK). Zn(2+)-binding residues include C262, C265, C290, and C293.

This sequence belongs to the TFS-II family. In terms of assembly, interacts with the basal transcription factor GTF2B. Interacts with REXO1.

The protein localises to the nucleus. In terms of biological role, necessary for efficient RNA polymerase II transcription elongation past template-encoded arresting sites. The arresting sites in DNA have the property of trapping a certain fraction of elongating RNA polymerases that pass through, resulting in locked ternary complexes. Cleavage of the nascent transcript by S-II allows the resumption of elongation from the new 3'-terminus. The sequence is that of Transcription elongation factor A protein 2 (TCEA2) from Bos taurus (Bovine).